Here is a 38-residue protein sequence, read N- to C-terminus: Photosystem II reaction center protein T (38 aa).

Residues 3–23 (ALVYTFLLVSTLGIIFFAIFF) form a helical membrane-spanning segment.

Belongs to the PsbT family. PSII is composed of 1 copy each of membrane proteins PsbA, PsbB, PsbC, PsbD, PsbE, PsbF, PsbH, PsbI, PsbJ, PsbK, PsbL, PsbM, PsbT, PsbY, PsbZ, Psb30/Ycf12, at least 3 peripheral proteins of the oxygen-evolving complex and a large number of cofactors. It forms dimeric complexes.

It is found in the plastid. It localises to the chloroplast thylakoid membrane. Found at the monomer-monomer interface of the photosystem II (PS II) dimer, plays a role in assembly and dimerization of PSII. PSII is a light-driven water plastoquinone oxidoreductase, using light energy to abstract electrons from H(2)O, generating a proton gradient subsequently used for ATP formation. In Secale cereale (Rye), this protein is Photosystem II reaction center protein T.